A 356-amino-acid polypeptide reads, in one-letter code: MPLTKYKAAAVTSEPAWFNLEAGVQKTIDFINEAGQAGCKLIAFPEVWIPGYPYWMWKINYQQSLPMLKKYRENSMAVDSDEFRRIRRAARDNQIHVSLGFSEIDHATLYLAQALISPTGEVLNHRRKIKPTHVEKLVYGDGAGDTFTSVVPTELGRLGQLNCWENMNPFLKALNVSAGEQIHIAAWPVYPGKETLKYPDPATNVADPASDLVTPAYAIETGTWTLAPFQRLSAEGLKMNTPEGVEPETDPTTYNGHARIYRPDGSLVVKPDKDFDGLLFVDIDLNECHLTKALADFSGHYMRPDLIRLLVDTRRKELVTEAEGNDGVKAYSTRERLGLNLPLDGSKEDEKVPVAL.

A CN hydrolase domain is found at 6-285 (YKAAAVTSEP…DGLLFVDIDL (280 aa)). E46 acts as the Proton acceptor in catalysis. K128 is an active-site residue. C163 acts as the Nucleophile in catalysis.

Belongs to the carbon-nitrogen hydrolase superfamily. Nitrilase family. Oligomer of dimers, forming left-handed helical fibers.

The enzyme catalyses formamide = hydrogen cyanide + H2O. Catalyzes the hydration of cyanide to formamide. Degradation of cyanide may be important for plant pathogenic fungi in infection of cyanogenic plants. This chain is Cyanide hydratase, found in Leptosphaeria maculans (Blackleg fungus).